A 57-amino-acid polypeptide reads, in one-letter code: Potassium channel toxin alpha-KTx 23.3 (57 aa).

The signal sequence occupies residues 1–23; that stretch reads MKMSIVIILLLFTCLIATNGASG. 4 disulfide bridges follow: Cys-26-Cys-46, Cys-32-Cys-51, Cys-36-Cys-53, and Cys-41-Cys-56.

This sequence belongs to the short scorpion toxin superfamily. Potassium channel inhibitor family. Alpha-KTx 23 subfamily. Expressed by the venom gland.

The protein localises to the secreted. In terms of biological role, this toxin shows both immunosuppressive and anti-inflammatory activities. It has the potential to inhibit human T cell activation, since it reduces IL-2 secretion and the expression of T cell activation marker CD69 and acts as an anti-inflammatory agent, since it provokes the reduction of secretion of both IFN-gamma and TNF-alpha. In vivo, the delayed-type hypersensitivity response in rat autoimmune disease model is ameliorated in the presence of this toxin. Acts by blocking Kv1.3/KCNA3 potassium channels of T-lymphocytes. The polypeptide is Potassium channel toxin alpha-KTx 23.3 (Scorpiops tibetanus (Scorpion)).